The chain runs to 1001 residues: Serine/threonine-protein kinase TAO1 (1001 aa).

Position 9 is a phosphoserine (serine 9). A Protein kinase domain is found at 28-281 (FTDLREIGHG…SEELLKHIFV (254 aa)). ATP contacts are provided by residues 34-42 (IGHGSFGAV) and lysine 57. Residue aspartate 151 is the Proton acceptor of the active site. The interval 324–433 (PAVEAQEEEE…QVSRHKSHYR (110 aa)) is disordered. The segment covering 350-373 (SNQSIPSMSISASSQSSSVNSLPD) has biased composition (low complexity). Composition is skewed to basic and acidic residues over residues 375-388 (SDDK…EGDH) and 399-416 (LKPE…RTRA). Residues serine 421 and serine 445 each carry the phosphoserine modification. Positions 458-651 (SELREQMSGY…QTQKDLEHAM (194 aa)) form a coiled coil. Positions 567–587 (KEELNENQSTPKKEKQEWLSK) are disordered. Over residues 577-587 (PKKEKQEWLSK) the composition is skewed to basic and acidic residues. Threonine 669 is subject to Phosphothreonine. Residues 754–877 (KAVLKRLKEE…LERQAREIEA (124 aa)) are a coiled coil. The disordered stretch occupies residues 911-1001 (SHNPTGGPGP…ISNGSHMSYT (91 aa)). Serine 965 carries the phosphoserine modification. Over residues 975–1001 (GGRTEQGMSRSTSVTSQISNGSHMSYT) the composition is skewed to polar residues.

It belongs to the protein kinase superfamily. STE Ser/Thr protein kinase family. STE20 subfamily. As to quaternary structure, self-associates. Interacts with MAP2K3. Interacts with SPRED1. Interacts with TESK1; the interaction inhibits TAOK1 kinase activity. Interacts with MAP3K7. In terms of processing, proteolytically processed by caspase-3 (CASP3). Autophosphorylated. Phosphorylated by ATM in response to DNA damage. Phosphorylated by LRRK2. As to expression, highly expressed in the testis, and to a lower extent also expressed in brain, placenta, colon and skeletal muscle.

Its subcellular location is the cytoplasm. The enzyme catalyses L-seryl-[protein] + ATP = O-phospho-L-seryl-[protein] + ADP + H(+). It catalyses the reaction L-threonyl-[protein] + ATP = O-phospho-L-threonyl-[protein] + ADP + H(+). With respect to regulation, serine/threonine-protein kinase activity is inhibited by SPRED1. In terms of biological role, serine/threonine-protein kinase involved in various processes such as p38/MAPK14 stress-activated MAPK cascade, DNA damage response and regulation of cytoskeleton stability. Phosphorylates MAP2K3, MAP2K6 and MARK2. Acts as an activator of the p38/MAPK14 stress-activated MAPK cascade by mediating phosphorylation and subsequent activation of the upstream MAP2K3 and MAP2K6 kinases. Involved in G-protein coupled receptor signaling to p38/MAPK14. In response to DNA damage, involved in the G2/M transition DNA damage checkpoint by activating the p38/MAPK14 stress-activated MAPK cascade, probably by mediating phosphorylation of MAP2K3 and MAP2K6. Acts as a regulator of cytoskeleton stability by phosphorylating 'Thr-208' of MARK2, leading to activate MARK2 kinase activity and subsequent phosphorylation and detachment of MAPT/TAU from microtubules. Also acts as a regulator of apoptosis: regulates apoptotic morphological changes, including cell contraction, membrane blebbing and apoptotic bodies formation via activation of the MAPK8/JNK cascade. Plays an essential role in the regulation of neuronal development in the central nervous system. Also plays a role in the regulation of neuronal migration to the cortical plate. In Homo sapiens (Human), this protein is Serine/threonine-protein kinase TAO1 (TAOK1).